We begin with the raw amino-acid sequence, 267 residues long: Ribosomal RNA small subunit methyltransferase A (267 aa).

Residues His13, Leu15, Gly40, Glu61, Asp85, and Asn105 each coordinate S-adenosyl-L-methionine.

It belongs to the class I-like SAM-binding methyltransferase superfamily. rRNA adenine N(6)-methyltransferase family. RsmA subfamily.

It is found in the cytoplasm. It carries out the reaction adenosine(1518)/adenosine(1519) in 16S rRNA + 4 S-adenosyl-L-methionine = N(6)-dimethyladenosine(1518)/N(6)-dimethyladenosine(1519) in 16S rRNA + 4 S-adenosyl-L-homocysteine + 4 H(+). In terms of biological role, specifically dimethylates two adjacent adenosines (A1518 and A1519) in the loop of a conserved hairpin near the 3'-end of 16S rRNA in the 30S particle. May play a critical role in biogenesis of 30S subunits. The protein is Ribosomal RNA small subunit methyltransferase A of Bacteroides thetaiotaomicron (strain ATCC 29148 / DSM 2079 / JCM 5827 / CCUG 10774 / NCTC 10582 / VPI-5482 / E50).